A 934-amino-acid polypeptide reads, in one-letter code: MRTPPRPEGLYPSPTVRYTQFMVETGHIQLLQITYPHTHSRFRMYERAHFAACLLALVLFQRAESCDPRPVLVQVPNTVPAGYFITQVTLNGCTAIPVSFTSSDPDFTVNTDGSIVTLRSLVISTKRFSVLVQDNSGLDWRVEIILSCKNEDSQKSGSVAQKRAKRRWRPLPFSVVENASPPFPKDVEMIASDSSVNYTVHYVISGQGVTEEPIGLFQLDQKTGMVRVTGPVDREKNPEFNFIARAFDQNNREVDQFLPITVMVEDVNDNAPEFTGNRFFTVEERCRAGTRVGQVNATDRDQPKTPHSLIKYILLNATDMFSIDQSTGIITAKSNTLDREAQDKVFVGVEIRDMGGAPNGLFNRGTAVISLTDVNDNPPTFKEKLYKGTIKENLANVLVTRIPVEDKDLVNTPNWKAVYEVTKGNENGNFRMETDPKTNEGLLYVVKGLDFEKTPVMNLEVTARNEAPLVGTDAKWQSVPLQLNVEDVDEGPEFNPNIMYLKVKENLPNGTVIGTYKALDPETKNSNGIKYYKLTDPGNWITVVESTGELKVANTIDRESSLVHNDTYNITIKAVDESKKTGNGVVILQIEDVNDNIPVIQRPDLNMCNRGDAVSSVLVEAVDQDKPPYSTPFIFELGAEQEGKWKLKDITDSSVVLQQVEPMPNGMYTVPITVKDLQGTGKEQIVNVRVCSCQREDSGVGICGARSASVSLGNYGILALVLSGLLLLLLCLFLIFFCTTKRDKLQITDDTGTGGILLKSNTEAPGEEVKDGTLLLIPTADVVDGSFQSAVTESKNVNTAPGRYGQQFFQSGGVYNTTTQEFGTDQYYTSGRYDNKIYGNGTLQKFSNTGTLDTWRTNGCYLDRKLAYFGEQEDGRYADDLLKNYGNEGVGSSAGSVGCCSILGEQESMEFLNTLGPKFRPLADICYTTNKTGK.

Cadherin domains follow at residues 167–274 (RWRP…APEF), 274–381 (FTGN…PPTF), 382–494 (KEKL…GPEF), and 495–600 (NPNI…IPVI). Over 167–716 (RWRPLPFSVV…SASVSLGNYG (550 aa)) the chain is Extracellular. 3 N-linked (GlcNAc...) asparagine glycosylation sites follow: Asn-197, Asn-296, and Asn-316. N-linked (GlcNAc...) asparagine glycans are attached at residues Asn-509, Asn-565, and Asn-569. Residues 717 to 737 (ILALVLSGLLLLLLCLFLIFF) traverse the membrane as a helical segment. Residues 738–934 (CTTKRDKLQI…ICYTTNKTGK (197 aa)) are Cytoplasmic-facing.

As to expression, expressed at low levels in the brain and heart.

It localises to the cell junction. Its subcellular location is the desmosome. The protein resides in the cell membrane. Its function is as follows. A component of desmosome cell-cell junctions which are required for positive regulation of cellular adhesion. Involved in the interaction of plaque proteins and intermediate filaments mediating cell-cell adhesion. Involved in the formation and structural organization of desmosome cell-cell junctions during embryonic development. Required for embryogenesis, specifically for progression of epiboly and normal convergence-extension movements during gastrulation. Required for the development of desmosomal-rich midlines in the heart. Plays an important role in ventricular contraction and resulting heart stroke volume. This is Desmocollin 2-like protein from Danio rerio (Zebrafish).